Consider the following 201-residue polypeptide: Recombination protein RecR (201 aa).

Residues 60–75 (CSRCFHFTDAEECSIC) form a C4-type zinc finger. One can recognise a Toprim domain in the interval 83–178 (GEICVVETTA…RVSRIAYGIP (96 aa)).

This sequence belongs to the RecR family.

May play a role in DNA repair. It seems to be involved in an RecBC-independent recombinational process of DNA repair. It may act with RecF and RecO. This chain is Recombination protein RecR, found in Syntrophobacter fumaroxidans (strain DSM 10017 / MPOB).